The following is a 526-amino-acid chain: Methyltetrahydroprotoberberine 14-monooxygenase (526 aa).

A helical transmembrane segment spans residues 14–34 (LLLQYLQPISVALVVIALVWN). C468 lines the heme pocket.

Belongs to the cytochrome P450 family. Requires heme as cofactor. Mainly expressed in roots, and barely in stems, leaves and carpels.

It localises to the membrane. The enzyme catalyses (S)-cis-N-methylcanadine + reduced [NADPH--hemoprotein reductase] + O2 = allocryptopine + oxidized [NADPH--hemoprotein reductase] + H2O + 2 H(+). It carries out the reaction (S)-cis-N-methylstylopine + reduced [NADPH--hemoprotein reductase] + O2 = protopine + oxidized [NADPH--hemoprotein reductase] + H2O + 2 H(+). It catalyses the reaction (S)-cis-N-methyltetrahydrothalifendine + reduced [NADPH--hemoprotein reductase] + O2 = 7-hydroxy-8-methoxy-11-methyl-17,19-dioxa-11-azatetracyclo[12.7.0.0(4,9).0(16,20)]henicosa-1(21),4(9),5,7,14,16(20)-hexaen-2-one + oxidized [NADPH--hemoprotein reductase] + H2O + 2 H(+). The catalysed reaction is (S)-cis-N-methyltetrahydropalmatine + reduced [NADPH--hemoprotein reductase] + O2 = muramine + oxidized [NADPH--hemoprotein reductase] + H2O + 2 H(+). It participates in alkaloid biosynthesis. Its activity is regulated as follows. Repressed by cytochrome P450 inhibitors ketoconazole, metyrapone, prochloraz, ancymidol and cytochrome C. Functionally, involved in the biosynthesis of the isoquinoline alkaloid sanguinarine. Catalyzes the conversion of N-methylated protoberberine alkaloids N-methylstylopine and N-methylcanadine into protopine and allocryptopine, respectively. Can also use (S)-cis-N-methyltetrahydrothalifendine and (S)-cis-N-methyltetrahydropalmatine as substrates. The sequence is that of Methyltetrahydroprotoberberine 14-monooxygenase from Papaver somniferum (Opium poppy).